The sequence spans 239 residues: 2-C-methyl-D-erythritol 4-phosphate cytidylyltransferase (239 aa).

This sequence belongs to the IspD/TarI cytidylyltransferase family. IspD subfamily. In terms of assembly, homodimer.

The catalysed reaction is 2-C-methyl-D-erythritol 4-phosphate + CTP + H(+) = 4-CDP-2-C-methyl-D-erythritol + diphosphate. Its pathway is isoprenoid biosynthesis; isopentenyl diphosphate biosynthesis via DXP pathway; isopentenyl diphosphate from 1-deoxy-D-xylulose 5-phosphate: step 2/6. Its function is as follows. Catalyzes the formation of 4-diphosphocytidyl-2-C-methyl-D-erythritol from CTP and 2-C-methyl-D-erythritol 4-phosphate (MEP). The chain is 2-C-methyl-D-erythritol 4-phosphate cytidylyltransferase from Sodalis glossinidius (strain morsitans).